The chain runs to 146 residues: Negative cofactor 2 complex subunit beta (146 aa).

A disordered region spans residues 124-146; the sequence is FRQSRSRLHHNSVSDPVKSEDSS. 3 positions are modified to phosphoserine: Ser135, Ser137, and Ser142.

Component of the NC2 (negative cofactor 2) complex composed of BUR6 and NCB2. The NC2 complex associates with SPT15/TBP. Interacts with SPT15/TBP.

The protein localises to the nucleus. In terms of biological role, component of the NC2 complex which represses RNA polymerase II transcription through binding to SPT15/TBP and thereby inhibiting the assembly of the preinitiation complex. The NC2 complex may also mediate transcriptional activation from TATA-driven promoters through association with SPT15/TBP. The sequence is that of Negative cofactor 2 complex subunit beta (NCB2) from Saccharomyces cerevisiae (strain ATCC 204508 / S288c) (Baker's yeast).